The following is a 257-amino-acid chain: Major prion protein (257 aa).

Positions 1–24 are cleaved as a signal peptide; that stretch reads MVKSHIGSWLLVLFVATWSDIGFC. An interaction with ADGRG6 region spans residues 25–41; the sequence is KKRPKPGGGWNTGGSRY. The interval 25-234 is interaction with GRB2, ERI3 and SYN1; the sequence is KKRPKPGGGW…ESEAYYQRGA (210 aa). The tract at residues 27–114 is disordered; the sequence is RPKPGGGWNT…KPSKPKTNMK (88 aa). Tandem repeats lie at residues 54–62, 63–70, 71–78, 79–86, and 87–95. A 5 X 8 AA tandem repeats of P-H-G-G-G-W-G-Q region spans residues 54–95; it reads PQGGGGWGQPHGGGWGQPHGGGWGQPHGGGWGQPHGGGGWGQ. Residues 55 to 101 show a composition bias toward gly residues; it reads QGGGGWGQPHGGGWGQPHGGGWGQPHGGGWGQPHGGGGWGQGGGSHG. 12 residues coordinate Cu(2+): H64, G65, G66, H72, G73, G74, H80, G81, G82, H88, G90, and G91. A disulfide bridge links C183 with C218. 2 N-linked (GlcNAc...) asparagine glycosylation sites follow: N185 and N201. A lipid anchor (GPI-anchor amidated alanine) is attached at A234. Residues 235–257 constitute a propeptide, removed in mature form; it reads SAILFSPPPVILLISLLILLIVG.

Belongs to the prion family. In terms of assembly, monomer and homodimer. Has a tendency to aggregate into amyloid fibrils containing a cross-beta spine, formed by a steric zipper of superposed beta-strands. Soluble oligomers may represent an intermediate stage on the path to fibril formation. Copper binding may promote oligomerization. Interacts with GRB2, APP, ERI3/PRNPIP and SYN1. Mislocalized cytosolically exposed PrP interacts with MGRN1; this interaction alters MGRN1 subcellular location and causes lysosomal enlargement. Interacts with APP. Interacts with KIAA1191. Interacts with ADGRG6.

The protein resides in the cell membrane. The protein localises to the golgi apparatus. In terms of biological role, its primary physiological function is unclear. May play a role in neuronal development and synaptic plasticity. May be required for neuronal myelin sheath maintenance. May promote myelin homeostasis through acting as an agonist for ADGRG6 receptor. May play a role in iron uptake and iron homeostasis. Soluble oligomers are toxic to cultured neuroblastoma cells and induce apoptosis (in vitro). Association with GPC1 (via its heparan sulfate chains) targets PRNP to lipid rafts. Also provides Cu(2+) or Zn(2+) for the ascorbate-mediated GPC1 deaminase degradation of its heparan sulfate side chains. The protein is Major prion protein (PRNP) of Neovison vison (American mink).